A 330-amino-acid chain; its full sequence is MDKTMTLFLLLSTLLLTTSLAKDLCHKDDKTTLLKIKKSLNNPYHLASWDPKTDCCSWYCLECGDATVNHRVTSLIIQDGEISGQIPPEVGDLPYLTSLIFRKLTNLTGHIQPTIAKLKNLTFLRLSWTNLTGPVPEFLSQLKNLEYIDLSFNDLSGSIPSSLSSLRKLEYLELSRNKLTGPIPESFGTFSGKVPSLFLSHNQLSGTIPKSLGNPDFYRIDLSRNKLQGDASILFGAKKTTWIVDISRNMFQFDLSKVKLAKTLNNLDMNHNGITGSIPAEWSKAYFQLLNVSYNRLCGRIPKGEYIQRFDSYSFFHNKCLCGAPLPSCK.

The signal sequence occupies residues Met1 to Ala21. 2 disulfides stabilise this stretch: Cys25-Cys55 and Cys56-Cys63. 10 LRR repeats span residues Asn69–Leu93, Pro94–Lys117, Leu118–Gln141, Leu142–Leu166, Arg167–Gly192, Val194–Pro215, Phe217–Ala237, Lys238–Leu260, Ala261–Ala285, and Phe287–Gln308. 3 N-linked (GlcNAc...) asparagine glycosylation sites follow: Asn106, Asn120, and Asn130. Asn291 is a glycosylation site (N-linked (GlcNAc...) asparagine). 2 cysteine pairs are disulfide-bonded: Cys298/Cys320 and Cys322/Cys329.

The protein belongs to the polygalacturonase-inhibiting protein family.

Its subcellular location is the secreted. The protein resides in the cell wall. The protein localises to the membrane. Its function is as follows. Inhibitor of fungal polygalacturonase. It is an important factor for plant resistance to phytopathogenic fungi. This chain is Polygalacturonase inhibitor 2 (PGIP2), found in Arabidopsis thaliana (Mouse-ear cress).